Consider the following 484-residue polypeptide: Chromosomal replication initiator protein DnaA (484 aa).

A domain I, interacts with DnaA modulators region spans residues 1–73 (MQEGKNIWSL…EILTEKGHNT (73 aa)). The interval 73–140 (TINVEFINPP…EDIHTKYRNP (68 aa)) is domain II. Residues 141–357 (FLKKKYTFEN…AAVTKLKAHI (217 aa)) form a domain III, AAA+ region region. Positions 185, 187, 188, and 189 each coordinate ATP. A domain IV, binds dsDNA region spans residues 358-484 (DLEDIEIDTS…IELMNKINKN (127 aa)).

Belongs to the DnaA family. Oligomerizes as a right-handed, spiral filament on DNA at oriC.

The protein localises to the cytoplasm. Its function is as follows. Plays an essential role in the initiation and regulation of chromosomal replication. ATP-DnaA binds to the origin of replication (oriC) to initiate formation of the DNA replication initiation complex once per cell cycle. Binds the DnaA box (a 9 base pair repeat at the origin) and separates the double-stranded (ds)DNA. Forms a right-handed helical filament on oriC DNA; dsDNA binds to the exterior of the filament while single-stranded (ss)DNA is stabiized in the filament's interior. The ATP-DnaA-oriC complex binds and stabilizes one strand of the AT-rich DNA unwinding element (DUE), permitting loading of DNA polymerase. After initiation quickly degrades to an ADP-DnaA complex that is not apt for DNA replication. Binds acidic phospholipids. This chain is Chromosomal replication initiator protein DnaA, found in Borrelia turicatae (strain 91E135).